The chain runs to 1196 residues: NACHT, LRR and PYD domains-containing protein 1b allele 5 (1196 aa).

Positions 1–22 are disordered; that stretch reads MEESPPKQKSNTKVTQHEGQQD. Positions 126–435 constitute an NACHT domain; that stretch reads QLVIIEGAAG…EFFAAISCIL (310 aa). Residue 132–139 participates in ATP binding; it reads GAAGIGKS. 2 LRR repeats span residues 627 to 647 and 684 to 704; these read NLEGLDLSGNSLRYSVVQSLC and SLTELYLQLNDLGDDGVRMLC. The tract at residues 789 to 922 is ZU5; the sequence is FWGPTGPVAT…GYTVLKNPSF (134 aa). Residues 789 to 1072 enclose the FIIND domain; that stretch reads FWGPTGPVAT…KFDHLCDQEF (284 aa). Residues 923–1072 are UPA; that stretch reads SPMGVVLRII…KFDHLCDQEF (150 aa). The CARD domain maps to 1106–1189; sequence HFMDQHREQL…HLVMDLFEKS (84 aa).

This sequence belongs to the NLRP family. Interacts with DPP9; leading to inhibit activation of the inflammasome. DPP9 acts via formation of a ternary complex, composed of a DPP9 homodimer, one full-length Nlrp1b protein, and one cleaved C-terminus of Nlrp1b (NACHT, LRR and PYD domains-containing protein 1b, C-terminus). Interacts with DPP8; leading to inhibit activation of the inflammasome, probably via formation of a ternary complex with DPP8. Interacts (via LRR repeats) with BCL2 and BCL2L1 (via the loop between motifs BH4 and BH3). Interacts with NOD2; this interaction may increase IL1B release. Interacts with EIF2AK2/PKR; this interaction requires EIF2AK2 activity, is accompanied by EIF2AK2 autophosphorylation and promotes inflammasome assembly in response to B.anthracis lethal toxin. Interacts with MEFV; this interaction targets Nlrp1b to degradation by autophagy, hence preventing excessive IL1B- and IL18-mediated inflammation. In terms of assembly, interacts with the C-terminal part of Nlrp1b (NACHT, LRR and PYD domains-containing protein 1b, C-terminus) in absence of pathogens and other damage-associated signals. As to quaternary structure, interacts with the N-terminal part of Nlrp1b (NACHT, LRR and PYD domains-containing protein 1b, N-terminus) in absence of pathogens and other damage-associated signals. Homomultimer; forms the Nlrp1b inflammasome polymeric complex, a filament composed of homopolymers of this form in response to pathogens and other damage-associated signals. The Nlrp1b inflammasome polymeric complex directly recruits pro-caspase-1 (proCASP1) independently of PYCARD/ASC. Interacts (via CARD domain) with CASP1 (via CARD domain); leading to CASP1 activation. In terms of processing, autocatalytically cleaved. Autocatalytic cleavage in FIIND region occurs constitutively, prior to activation signals, and is required for inflammasome activity (IL1B release), possibly by facilitating CASP1 binding. Both N- and C-terminal parts remain associated non-covalently. Ubiquitinated by the N-end rule pathway in response to pathogens and other damage-associated signals, leading to its degradation by the proteasome and subsequent release of the cleaved C-terminal part of the protein (NACHT, LRR and PYD domains-containing protein 1b, C-terminus), which polymerizes and forms the Nlrp1b inflammasome. Post-translationally, (Microbial infection) Cleavage by B.anthracis lethal toxin (LT) endopeptidase promotes ubiquitination and degradation of the N-terminal part, releasing the cleaved C-terminal part of the protein (NACHT, LRR and PYD domains-containing protein 1b, C-terminus), which polymerizes and forms the Nlrp1b inflammasome. In terms of tissue distribution, expressed in macrophages.

The protein localises to the cytoplasm. It localises to the cytosol. The protein resides in the inflammasome. Activated by cleavage by B.anthracis lethal toxin (LT) endopeptidase. Cleavage by LT promotes ubiquitination and degradation of the N-terminal part, releasing the cleaved C-terminal part of the protein (NACHT, LRR and PYD domains-containing protein 1b, C-terminus), which polymerizes and forms the Nlrp1b inflammasome. Nlrp1b inflammasome is inhibited by DPP8 and DPP9, which sequester the C-terminal fragment of Nlrp1b (NACHT, LRR and PYD domains-containing protein 1b, C-terminus) in a ternary complex, thereby preventing Nlrp1b oligomerization and activation. Nlrp1b inflammasome is activated by Val-boroPro (Talabostat, PT-100), an inhibitor of dipeptidyl peptidases DPP8 and DPP9. Val-boroPro relieves inhibition of DPP8 and/or DPP9 by promoting disruption of the ternary complex, releasing its C-terminal part from autoinhibition. Activated by metabolic inhibitors, such as 2-deoxy-D-glucose and sodium azide. Not activated by muramyl dipeptide, nor by full-length bacterial peptidoglycan. Functionally, acts as the sensor component of the Nlrp1b inflammasome, which mediates inflammasome activation in response to various pathogen-associated signals, leading to subsequent pyroptosis. Inflammasomes are supramolecular complexes that assemble in the cytosol in response to pathogens and other damage-associated signals and play critical roles in innate immunity and inflammation. Acts as a recognition receptor (PRR): recognizes specific pathogens and other damage-associated signals, such as B.anthracis lethal toxin (LT) or Val-boroPro inhibitor, and mediates the formation of the inflammasome polymeric complex. In response to pathogen-associated signals, the N-terminal part of Nlrp1b is degraded by the proteasome, releasing the cleaved C-terminal part of the protein (NACHT, LRR and PYD domains-containing protein 1b, C-terminus), which polymerizes to initiate the formation of the inflammasome complex: the inflammasome directly recruits pro-caspase-1 (proCASP1) independently of PYCARD/ASC and promotes caspase-1 (CASP1) activation, which subsequently cleaves and activates inflammatory cytokines IL1B and IL18 and gasdermin-D (GSDMD), leading to pyroptosis. In the absence of GSDMD expression, the Nlrp1b inflammasome is able to recruit and activate CASP8, leading to activation of gasdermin-E (GSDME). Activation of Nlrp1b inflammasome is also required for HMGB1 secretion; the active cytokines and HMGB1 stimulate inflammatory responses. Primary mediator of macrophage susceptibility to B.anthracis LT: in response to B.anthracis infection, macrophages and dendritic cells release IL1B and undergo pyroptosis. This early inflammatory response to the toxin increases resistance to infection by B.anthracis spores. Its function is as follows. Constitutes the precursor of the Nlrp1b inflammasome, which mediates autoproteolytic processing within the FIIND domain to generate the N-terminal and C-terminal parts, which are associated non-covalently in absence of pathogens and other damage-associated signals. In terms of biological role, regulatory part that prevents formation of the Nlrp1b inflammasome: in absence of pathogens and other damage-associated signals, interacts with the C-terminal part of Nlrp1b (NACHT, LRR and PYD domains-containing protein 1b, C-terminus), preventing activation of the Nlrp1b inflammasome. In response to pathogen-associated signals, this part is ubiquitinated by the N-end rule pathway and degraded by the proteasome, releasing the cleaved C-terminal part of the protein, which polymerizes and forms the Nlrp1b inflammasome. Constitutes the active part of the Nlrp1b inflammasome. In absence of pathogens and other damage-associated signals, interacts with the N-terminal part of Nlrp1b (NACHT, LRR and PYD domains-containing protein 1b, N-terminus), preventing activation of the Nlrp1b inflammasome. In response to pathogen-associated signals, the N-terminal part of Nlrp1b is degraded by the proteasome, releasing this form, which polymerizes to form the Nlrp1b inflammasome complex: the Nlrp1b inflammasome complex then directly recruits pro-caspase-1 (proCASP1) and promotes caspase-1 (CASP1) activation, leading to gasdermin-D (GSDMD) cleavage and subsequent pyroptosis. The protein is NACHT, LRR and PYD domains-containing protein 1b allele 5 (Nlrp1b) of Mus musculus (Mouse).